We begin with the raw amino-acid sequence, 390 residues long: HIT domain-containing protein DDB_G0272839 (390 aa).

Residues 168-201 (DNENEKEKEKEMELDNDNTNTESIPPITSKSTST) are disordered. Over residues 184–201 (DNTNTESIPPITSKSTST) the composition is skewed to low complexity. The 112-residue stretch at 232 to 343 (YFCNKPESFL…ISNDYNTKYL (112 aa)) folds into the HIT domain.

The sequence is that of HIT domain-containing protein DDB_G0272839 from Dictyostelium discoideum (Social amoeba).